The chain runs to 267 residues: 4-hydroxy-tetrahydrodipicolinate reductase (267 aa).

An NAD(+)-binding site is contributed by 11–16; that stretch reads GAAGRM. Arg39 is an NADP(+) binding site. NAD(+) is bound by residues 100–102 and 126–129; these read GTT and APNF. Catalysis depends on His156, which acts as the Proton donor/acceptor. Position 157 (His157) interacts with (S)-2,3,4,5-tetrahydrodipicolinate. Lys160 functions as the Proton donor in the catalytic mechanism. 166–167 is a binding site for (S)-2,3,4,5-tetrahydrodipicolinate; the sequence is GT.

This sequence belongs to the DapB family.

It localises to the cytoplasm. The catalysed reaction is (S)-2,3,4,5-tetrahydrodipicolinate + NAD(+) + H2O = (2S,4S)-4-hydroxy-2,3,4,5-tetrahydrodipicolinate + NADH + H(+). The enzyme catalyses (S)-2,3,4,5-tetrahydrodipicolinate + NADP(+) + H2O = (2S,4S)-4-hydroxy-2,3,4,5-tetrahydrodipicolinate + NADPH + H(+). It participates in amino-acid biosynthesis; L-lysine biosynthesis via DAP pathway; (S)-tetrahydrodipicolinate from L-aspartate: step 4/4. Functionally, catalyzes the conversion of 4-hydroxy-tetrahydrodipicolinate (HTPA) to tetrahydrodipicolinate. In Moorella thermoacetica (strain ATCC 39073 / JCM 9320), this protein is 4-hydroxy-tetrahydrodipicolinate reductase.